A 257-amino-acid chain; its full sequence is Glutamate racemase (257 aa).

Substrate-binding positions include 12 to 13 (DS) and 44 to 45 (YG). The active-site Proton donor/acceptor is the C75. 76–77 (NT) is a binding site for substrate. The Proton donor/acceptor role is filled by C186. Position 187-188 (187-188 (TH)) interacts with substrate.

The protein belongs to the aspartate/glutamate racemases family.

It carries out the reaction L-glutamate = D-glutamate. It participates in cell wall biogenesis; peptidoglycan biosynthesis. Provides the (R)-glutamate required for cell wall biosynthesis. The sequence is that of Glutamate racemase from Clostridium kluyveri (strain NBRC 12016).